Here is a 268-residue protein sequence, read N- to C-terminus: Chymotrypsin-C (268 aa).

The first 16 residues, 1 to 16, serve as a signal peptide directing secretion; the sequence is MLGITVFTTFLAYASS. The propeptide at 17–29 is activation peptide; the sequence is CGAPIFQPNLSAR. 5 disulfides stabilise this stretch: Cys-17–Cys-141, Cys-59–Cys-75, Cys-155–Cys-222, Cys-186–Cys-202, and Cys-212–Cys-243. N-linked (GlcNAc...) asparagine glycosylation occurs at Asn-25. Positions 30–268 constitute a Peptidase S1 domain; the sequence is VVGGEDAIPH…IDWINQKLQL (239 aa). Catalysis depends on charge relay system residues His-74 and Asp-121. The active-site Charge relay system is Ser-216.

This sequence belongs to the peptidase S1 family. Elastase subfamily. In terms of assembly, monomer. The zymogen is secreted as a ternary complex composed of procarboxypeptidase A, chymotrypsinogen C and proproteinase E. Pancreas.

It is found in the secreted. The protein localises to the extracellular space. The enzyme catalyses Preferential cleavage: Leu-|-Xaa, Tyr-|-Xaa, Phe-|-Xaa, Met-|-Xaa, Trp-|-Xaa, Gln-|-Xaa, Asn-|-Xaa.. Regulates activation and degradation of trypsinogens and procarboxypeptidases by targeting specific cleavage sites within their zymogen precursors. Has chymotrypsin-type protease activity and hypocalcemic activity. The sequence is that of Chymotrypsin-C (CTRC) from Bos taurus (Bovine).